The chain runs to 334 residues: Inositol 2-dehydrogenase (334 aa).

This sequence belongs to the Gfo/Idh/MocA family. In terms of assembly, homotetramer.

The catalysed reaction is myo-inositol + NAD(+) = scyllo-inosose + NADH + H(+). In terms of biological role, involved in the oxidation of myo-inositol (MI) to 2-keto-myo-inositol (2KMI or 2-inosose). The sequence is that of Inositol 2-dehydrogenase from Cereibacter sphaeroides (strain ATCC 17023 / DSM 158 / JCM 6121 / CCUG 31486 / LMG 2827 / NBRC 12203 / NCIMB 8253 / ATH 2.4.1.) (Rhodobacter sphaeroides).